Here is a 283-residue protein sequence, read N- to C-terminus: 4-diphosphocytidyl-2-C-methyl-D-erythritol kinase (283 aa).

Lysine 10 is an active-site residue. 99–109 (PMGGGLGGGSS) lines the ATP pocket. Aspartate 141 is a catalytic residue.

The protein belongs to the GHMP kinase family. IspE subfamily. As to quaternary structure, homodimer.

It catalyses the reaction 4-CDP-2-C-methyl-D-erythritol + ATP = 4-CDP-2-C-methyl-D-erythritol 2-phosphate + ADP + H(+). It functions in the pathway isoprenoid biosynthesis; isopentenyl diphosphate biosynthesis via DXP pathway; isopentenyl diphosphate from 1-deoxy-D-xylulose 5-phosphate: step 3/6. Catalyzes the phosphorylation of the position 2 hydroxy group of 4-diphosphocytidyl-2C-methyl-D-erythritol. The protein is 4-diphosphocytidyl-2-C-methyl-D-erythritol kinase (ispE) of Salmonella typhimurium (strain LT2 / SGSC1412 / ATCC 700720).